Here is an 817-residue protein sequence, read N- to C-terminus: Dual specificity tyrosine-phosphorylation-regulated kinase mbk-2 (817 aa).

Disordered stretches follow at residues 1 to 46 (MAAL…HECP), 70 to 148 (PTSF…GPLG), 186 to 206 (GSYE…GSQQ), and 301 to 396 (LPNV…FRPE). Positions 7 to 25 (FTRNSRSYGQQPIDVTQQG) are enriched in polar residues. Composition is skewed to low complexity over residues 70–81 (PTSFSGASSSSS) and 97–111 (NLLG…SNSL). 2 stretches are compositionally biased toward polar residues: residues 122–143 (SGNT…TNNL) and 193–206 (GQAQ…GSQQ). The span at 303–318 (NVGTSSSNGSSNSSSG) shows a compositional bias: low complexity. The segment covering 327 to 351 (LMTQSIGGPNKHLSASHSTLNTAST) has biased composition (polar residues). A Phosphoserine; by cdk-1 modification is found at serine 362. Residues 364–392 (SNESLSRSHTSSSGGSQGGHNSNSGSNSG) show a composition bias toward low complexity. Residues 461–774 (YEVLKVIGKG…PAQALKHKWL (314 aa)) enclose the Protein kinase domain. Residues 467–475 (IGKGSFGQV) and lysine 490 contribute to the ATP site. Residue aspartate 587 is the Proton acceptor of the active site. The residue at position 621 (tyrosine 621) is a Phosphotyrosine; by autocatalysis.

The protein belongs to the protein kinase superfamily. CMGC Ser/Thr protein kinase family. MNB/DYRK subfamily. Part of a complex, consisting of pseudophosphatases egg-3, egg-4, egg-5 and kinase mbk-2; this complex is required for the oocyte-to-zygote transition. Interacts (via Tyr-619 and Tyr-621) with egg-4 (via tyrosine-protein phosphatase domain) and egg-5 (via tyrosine-protein phosphatase domain); mbk-2 tyrosine phosphorylation enhances the interaction. The interaction inhibits mbk-2 kinase activity and is required for mbk-2 oocyte cortex localization. Interacts (via N-terminus) with egg-3 (via tyrosine-protein phosphatase domain); the interaction does not affect mbk-2 kinase activity, is enhanced by mbk-2 tyrosine phosphorylation status and requires prior binding of mbk-2 to egg-4 and egg-5. Mg(2+) is required as a cofactor. Post-translationally, autophosphorylated. In terms of tissue distribution, in L1 larvae, expressed widely in the nervous system, including head neurons and the ventral nerve cord. In adult animals, continues to be expressed in the nervous system and is also expressed in body wall muscle.

The protein localises to the cytoplasm. It localises to the cell cortex. The catalysed reaction is L-seryl-[protein] + ATP = O-phospho-L-seryl-[protein] + ADP + H(+). The enzyme catalyses L-threonyl-[protein] + ATP = O-phospho-L-threonyl-[protein] + ADP + H(+). It carries out the reaction L-tyrosyl-[protein] + ATP = O-phospho-L-tyrosyl-[protein] + ADP + H(+). With respect to regulation, activated during oocyte maturation by phosphorylation on Ser-362 by cdk-1. The pseudotyrosine phosphatases egg-4 and egg-5 sequester activated mbk-2 until the meiotic divisions and inhibit mbk-2 kinase activity directly, using a mixed-inhibition mechanism that does not involve tyrosine dephosphorylation. In terms of biological role, required for oocyte-to-zygote transition in which it phosphorylates oocyte proteins, including mei-1, oma-1, oma-2, mex-5, and mex-6, modifying their activity and/or stability following meiosis. Through phosphorylation of P granule components including meg-1, promotes the disassembly of zygotic P granules in the anterior cytoplasm during zygote polarization, and thus plays a role in P granule distribution and segregation in early stage embryos following meiosis. Functions in both spindle positioning and in the posterior localization of cytoplasmic determinants, including pie-1, pos-1, and pgl-1, in early embryos. Involved in the asymmetric distribution of plk-1 at the 2-cell embryonic stage. The protein is Dual specificity tyrosine-phosphorylation-regulated kinase mbk-2 of Caenorhabditis elegans.